We begin with the raw amino-acid sequence, 551 residues long: Cytochrome P450 monooxygenase sdnQ (551 aa).

The interval 1–23 is disordered; sequence MDDPSIASGFQQGTGRTTGANGT. Over residues 8-23 the composition is skewed to polar residues; that stretch reads SGFQQGTGRTTGANGT. Asn-21 carries N-linked (GlcNAc...) asparagine glycosylation. The helical transmembrane segment at 41-57 threads the bilayer; it reads CIGTSLLVALLTTIIIY. Cys-491 contacts heme.

Belongs to the cytochrome P450 family. It depends on heme as a cofactor.

The protein resides in the membrane. The protein operates within antibiotic biosynthesis. Its function is as follows. Cytochrome P450 monooxygenase; part of the gene cluster that mediates the biosynthesis of sordarin and hypoxysordarin, glycoside antibiotics with a unique tetracyclic diterpene aglycone structure. First, the geranylgeranyl diphosphate synthase sdnC constructs GGDP from farnesyl diphosphate and isopentenyl diphosphate. The diterpene cyclase sdnA then catalyzes the cyclization of GGDP to afford cycloaraneosene. Cycloaraneosene is then hydroxylated four times by the putative cytochrome P450 monooxygenases sdnB, sdnE, sdnF and sdnH to give a hydroxylated cycloaraneosene derivative such as cycloaraneosene-8,9,13,19-tetraol. Although the order of the hydroxylations is unclear, at least C8, C9 and C13 of the cycloaraneosene skeleton are hydroxylated before the sordaricin formation. Dehydration of the 13-hydroxy group of the hydroxylated cycloaraneosene derivative might be catalyzed by an unassigned hypothetical protein such as sdnG and sdnP to construct the cyclopentadiene moiety. The FAD-dependent oxidoreductase sdnN is proposed to catalyze the oxidation at C9 of the hydroxylated cycloaraneosene derivative and also catalyze the Baeyer-Villiger oxidation to give the lactone intermediate. The presumed lactone intermediate would be hydrolyzed to give an acrolein moiety and a carboxylate moiety. Then, [4+2]cycloaddition would occur between the acrolein moiety and the cyclopentadiene moiety to give sordaricin. SdnN might also be involved in the [4+2]cycloaddition after the hypothesized oxidation to accommodate the oxidized product and prompt the [4+2]cycloaddition. GDP-6-deoxy-D-altrose may be biosynthesized from GDP-D-mannose by the putative GDP-mannose-4,6-dehydratase sdnI and the short-chain dehydrogenase sdnK. The glycosyltransferase sdnJ catalyzes the attachment of 6-deoxy-D-altrose onto the 19-hydroxy group of sordaricin to give 4'-O-demethylsordarin. The methyltransferase sdnD would complete the biosynthesis of sordarin. Sordarin can be further modified into hypoxysordarin. The unique acyl chain at the 3'-hydroxy group of hypoxysordarin would be constructed by an iterative type I PKS sdnO and the trans-acting polyketide methyltransferase sdnL. SdnL would be responsible for the introduction of an alpha-methyl group of the polyketide chain. Alternatively, the beta-lactamase-like protein sdnR might be responsible for the cleavage and transfer of the polyketide chain from the PKS sdnO to sordarin. Two putative cytochrome P450 monooxygenases, sdnQ and sdnT, might catalyze the epoxidations of the polyketide chain to complete the biosynthesis of hypoxysordarin. Transcriptional regulators sdnM and sdnS are presumably encoded for the transcriptional regulation of the expression of the sdn gene cluster. This Sordaria araneosa (Pleurage araneosa) protein is Cytochrome P450 monooxygenase sdnQ.